The sequence spans 214 residues: Riboflavin kinase (214 aa).

The tract at residues 1-27 (MRPDRPRDPVTGPDEGPESPYPIRMSG) is disordered. 2 residues coordinate Mg(2+): threonine 44 and asparagine 46. Glutamate 101 acts as the Nucleophile in catalysis.

Belongs to the flavokinase family. The cofactor is Zn(2+). Mg(2+) serves as cofactor.

It carries out the reaction riboflavin + ATP = FMN + ADP + H(+). The protein operates within cofactor biosynthesis; FMN biosynthesis; FMN from riboflavin (ATP route): step 1/1. Its function is as follows. Catalyzes the phosphorylation of riboflavin (vitamin B2) to form flavin mononucleotide (FMN) coenzyme. The sequence is that of Riboflavin kinase (fmn1) from Aspergillus niger (strain ATCC MYA-4892 / CBS 513.88 / FGSC A1513).